Reading from the N-terminus, the 441-residue chain is MSETIYALASAAGRAGIAVWRLSGEGSGTALSALTGKPLPEPRRARRVRLRDGAGEVLDDGLVLWFPAPHSFTGEDVAELHLHGGRAVAAALTARLGELGLRPAEPGEFSRRAFLNGKLDLTRAEAIADLVDAETAAQRRQALRQLDGGLAGLVEGWRSALVRAMAHLEAVIDFADEDIPDTLLEQSVGEVRSLRREMEVHLDERRNGERLRDGIHITILGAPNAGKSSLLNRLAGREAAIVSAQAGTTRDVIEVHLDLGGWPVIVADTAGLRDSACEIESEGVRRAADRAAKADLRLCVFDGTLYPNLDAATLEMIDDATLVVLNKRDLMTGETPASINGRPVLTLSAKAGEGVDDLVAELARVVESRFAMGSAPVLTRERHRVAVAEAVAALSRFDPGLGIEMAAEDLRLAARSLGRITGRVDVEEILDVIFHEFCIGK.

(6S)-5-formyl-5,6,7,8-tetrahydrofolate is bound by residues Arg-21, Glu-79, and Lys-118. Residues 214-367 enclose the TrmE-type G domain; the sequence is GIHITILGAP…LVAELARVVE (154 aa). GTP-binding positions include 224 to 229, 243 to 249, and 268 to 271; these read NAGKSS, SAQAGTT, and DTAG. Mg(2+) contacts are provided by Ser-228 and Thr-249. Lys-441 contacts (6S)-5-formyl-5,6,7,8-tetrahydrofolate.

Belongs to the TRAFAC class TrmE-Era-EngA-EngB-Septin-like GTPase superfamily. TrmE GTPase family. In terms of assembly, homodimer. Heterotetramer of two MnmE and two MnmG subunits. The cofactor is K(+).

The protein localises to the cytoplasm. Exhibits a very high intrinsic GTPase hydrolysis rate. Involved in the addition of a carboxymethylaminomethyl (cmnm) group at the wobble position (U34) of certain tRNAs, forming tRNA-cmnm(5)s(2)U34. This Paramagnetospirillum magneticum (strain ATCC 700264 / AMB-1) (Magnetospirillum magneticum) protein is tRNA modification GTPase MnmE.